Here is a 112-residue protein sequence, read N- to C-terminus: Protein lin-52 homolog (112 aa).

Belongs to the lin-52 family. As to quaternary structure, component of the DREAM complex.

In Tetraodon nigroviridis (Spotted green pufferfish), this protein is Protein lin-52 homolog (lin52).